The chain runs to 342 residues: Probable long-chain-alcohol O-fatty-acyltransferase 3 (342 aa).

8 consecutive transmembrane segments (helical) span residues 9–29 (IKLW…STGI), 36–56 (LLSV…FSYV), 58–78 (FSGC…ILFS), 115–135 (IPIW…QMYE), 153–173 (IFLE…ITLG), 227–247 (MFLG…MLFF), 255–275 (TGEV…EVAV), and 297–317 (VGFV…SGII).

The protein belongs to the wax synthase family.

It localises to the membrane. The catalysed reaction is a long chain fatty alcohol + a fatty acyl-CoA = a wax ester + CoA. Its function is as follows. Catalyzes the final step in the synthesis of long-chain linear esters (waxes). The chain is Probable long-chain-alcohol O-fatty-acyltransferase 3 (AT3) from Arabidopsis thaliana (Mouse-ear cress).